The primary structure comprises 427 residues: Serine--tRNA ligase (427 aa).

L-serine is bound at residue 231-233; the sequence is TAE. 262-264 serves as a coordination point for ATP; sequence RSE. Position 285 (E285) interacts with L-serine. 349-352 lines the ATP pocket; the sequence is EISS. S385 contributes to the L-serine binding site.

This sequence belongs to the class-II aminoacyl-tRNA synthetase family. Type-1 seryl-tRNA synthetase subfamily. In terms of assembly, homodimer. The tRNA molecule binds across the dimer.

The protein resides in the cytoplasm. It catalyses the reaction tRNA(Ser) + L-serine + ATP = L-seryl-tRNA(Ser) + AMP + diphosphate + H(+). It carries out the reaction tRNA(Sec) + L-serine + ATP = L-seryl-tRNA(Sec) + AMP + diphosphate + H(+). The protein operates within aminoacyl-tRNA biosynthesis; selenocysteinyl-tRNA(Sec) biosynthesis; L-seryl-tRNA(Sec) from L-serine and tRNA(Sec): step 1/1. Its function is as follows. Catalyzes the attachment of serine to tRNA(Ser). Is also able to aminoacylate tRNA(Sec) with serine, to form the misacylated tRNA L-seryl-tRNA(Sec), which will be further converted into selenocysteinyl-tRNA(Sec). The chain is Serine--tRNA ligase from Brucella melitensis biotype 2 (strain ATCC 23457).